An 83-amino-acid polypeptide reads, in one-letter code: Mu-theraphotoxin-Hhn2j 4 (83 aa).

Residues 1–21 (MKASMFLALAGLVLLFVVGYA) form the signal peptide. A propeptide spanning residues 22 to 48 (SESEEKEFPIELLSKIFAVDVFKGEGR) is cleaved from the precursor. Intrachain disulfides connect cysteine 50–cysteine 65, cysteine 57–cysteine 70, and cysteine 64–cysteine 77. Leucine 81 carries the leucine amide modification.

The protein belongs to the neurotoxin 10 (Hwtx-1) family. 15 (Hntx-3) subfamily. Monomer. As to expression, expressed by the venom gland.

Its subcellular location is the secreted. Its function is as follows. Lethal neurotoxin. Selectively blocks tetrodotoxin-sensitive voltage-gated sodium channels (Nav). Does not affect tetrodotoxin-resistant voltage-gated sodium channels or calcium channels. The protein is Mu-theraphotoxin-Hhn2j 4 of Cyriopagopus hainanus (Chinese bird spider).